The chain runs to 432 residues: Benzoyl-CoA reductase subunit B (432 aa).

This sequence belongs to the FldB/FldC dehydratase alpha/beta subunit family. As to quaternary structure, heterotetramer composed of A, B, C, and D subunits. It depends on iron-sulfur cluster as a cofactor. An oxidized flavin serves as cofactor.

The enzyme catalyses cyclohexa-1,5-diene-1-carbonyl-CoA + oxidized 2[4Fe-4S]-[ferredoxin] + 2 ADP + 2 phosphate = reduced 2[4Fe-4S]-[ferredoxin] + benzoyl-CoA + 2 ATP + 2 H2O. It catalyses the reaction 3-hydroxybenzoyl-CoA + AH2 + 2 ATP + 2 H2O = 3-hydroxycyclohexa-1,5-diene-1-carbonyl-CoA + A + 2 ADP + 2 phosphate + 2 H(+). In terms of biological role, catalyzes the anaerobic reduction of benzoyl-CoA and 3-hydroxybenzoyl-CoA to form cyclohexa-1,5-diene-1-carbonyl-CoA and 3-hydroxycyclohexa-1,5-diene-1-carbonyl-CoA, respectively. The enzyme also reduces other benzoyl-CoA analogs with small substituents at the aromatic ring. This chain is Benzoyl-CoA reductase subunit B (bcrB), found in Thauera aromatica.